The chain runs to 64 residues: Enteric beta-defensin (64 aa).

Positions 1 to 26 (MRLHHLLLTLLFLVLSAGSGFTQGIS) are cleaved as a signal peptide. Disulfide bonds link cysteine 31–cysteine 60, cysteine 38–cysteine 53, and cysteine 43–cysteine 61.

The protein belongs to the beta-defensin family. LAP/TAP subfamily. As to expression, inducibly expressed in enteric epithelial cells.

The protein resides in the secreted. Has antibacterial activity. The protein is Enteric beta-defensin (EBD) of Bos taurus (Bovine).